Reading from the N-terminus, the 195-residue chain is Inosine triphosphate pyrophosphatase (195 aa).

13–18 (TGNAKK) is a binding site for ITP. A Mg(2+)-binding site is contributed by Glu-43. Residues Lys-55, 71–72 (DT), Lys-88, 148–151 (FGWD), Lys-171, and 176–177 (HR) each bind ITP.

The protein belongs to the HAM1 NTPase family. As to quaternary structure, homodimer. It depends on Mg(2+) as a cofactor. Mn(2+) serves as cofactor.

It is found in the cytoplasm. The catalysed reaction is ITP + H2O = IMP + diphosphate + H(+). The enzyme catalyses dITP + H2O = dIMP + diphosphate + H(+). It carries out the reaction XTP + H2O = XMP + diphosphate + H(+). It catalyses the reaction N(6)-hydroxy-dATP + H2O = N(6)-hydroxy-dAMP + diphosphate + H(+). Pyrophosphatase that hydrolyzes the non-canonical purine nucleotides inosine triphosphate (ITP), deoxyinosine triphosphate (dITP) as well as 2'-deoxy-N-6-hydroxylaminopurine triphosphate (dHAPTP) and xanthosine 5'-triphosphate (XTP) to their respective monophosphate derivatives. The enzyme does not distinguish between the deoxy- and ribose forms. Probably excludes non-canonical purines from RNA and DNA precursor pools, thus preventing their incorporation into RNA and DNA and avoiding chromosomal lesions. The sequence is that of Inosine triphosphate pyrophosphatase (itpa) from Xenopus laevis (African clawed frog).